A 104-amino-acid polypeptide reads, in one-letter code: Large ribosomal subunit protein uL24 (104 aa).

Belongs to the universal ribosomal protein uL24 family. In terms of assembly, part of the 50S ribosomal subunit.

Functionally, one of two assembly initiator proteins, it binds directly to the 5'-end of the 23S rRNA, where it nucleates assembly of the 50S subunit. One of the proteins that surrounds the polypeptide exit tunnel on the outside of the subunit. This chain is Large ribosomal subunit protein uL24, found in Ectopseudomonas mendocina (strain ymp) (Pseudomonas mendocina).